The sequence spans 330 residues: Cathepsin S (330 aa).

The N-terminal stretch at 1-17 (MAVLGAPGVLCDNGATA) is a signal peptide. Positions 18 to 112 (ERPTLDHHWD…GTLKSSSNQT (95 aa)) are cleaved as a propeptide — activation peptide. 2 N-linked (GlcNAc...) asparagine glycosylation sites follow: asparagine 100 and asparagine 110. Cystine bridges form between cysteine 124/cysteine 222, cysteine 134/cysteine 179, cysteine 168/cysteine 211, and cysteine 271/cysteine 319. Residue cysteine 137 is part of the active site. Catalysis depends on residues histidine 277 and asparagine 297.

Belongs to the peptidase C1 family. Monomer. As to expression, highest levels occur in the ileum followed by spleen, brain, thyroid, ovary and uterus. Low levels are found in the liver, kidney, jejunum and lung with lowest levels in the heart.

The protein localises to the lysosome. The protein resides in the secreted. It is found in the cytoplasmic vesicle. Its subcellular location is the phagosome. The catalysed reaction is Similar to cathepsin L, but with much less activity on Z-Phe-Arg-|-NHMec, and more activity on the Z-Val-Val-Arg-|-Xaa compound.. Thiol protease. Key protease responsible for the removal of the invariant chain from MHC class II molecules and MHC class II antigen presentation. The bond-specificity of this proteinase is in part similar to the specificities of cathepsin L. This chain is Cathepsin S (Ctss), found in Rattus norvegicus (Rat).